The following is a 151-amino-acid chain: Deoxyuridine 5'-triphosphate nucleotidohydrolase (151 aa).

Residues 70 to 72 (RSG), Asn83, and 87 to 89 (TID) each bind substrate.

It belongs to the dUTPase family. Requires Mg(2+) as cofactor.

The enzyme catalyses dUTP + H2O = dUMP + diphosphate + H(+). The protein operates within pyrimidine metabolism; dUMP biosynthesis; dUMP from dCTP (dUTP route): step 2/2. In terms of biological role, this enzyme is involved in nucleotide metabolism: it produces dUMP, the immediate precursor of thymidine nucleotides and it decreases the intracellular concentration of dUTP so that uracil cannot be incorporated into DNA. This is Deoxyuridine 5'-triphosphate nucleotidohydrolase from Ruegeria pomeroyi (strain ATCC 700808 / DSM 15171 / DSS-3) (Silicibacter pomeroyi).